Consider the following 294-residue polypeptide: Bifunctional protein FolD (294 aa).

NADP(+) is bound by residues 166–168 (GRS), Ser191, and Ile232.

The protein belongs to the tetrahydrofolate dehydrogenase/cyclohydrolase family. As to quaternary structure, homodimer.

The catalysed reaction is (6R)-5,10-methylene-5,6,7,8-tetrahydrofolate + NADP(+) = (6R)-5,10-methenyltetrahydrofolate + NADPH. It carries out the reaction (6R)-5,10-methenyltetrahydrofolate + H2O = (6R)-10-formyltetrahydrofolate + H(+). It functions in the pathway one-carbon metabolism; tetrahydrofolate interconversion. In terms of biological role, catalyzes the oxidation of 5,10-methylenetetrahydrofolate to 5,10-methenyltetrahydrofolate and then the hydrolysis of 5,10-methenyltetrahydrofolate to 10-formyltetrahydrofolate. The polypeptide is Bifunctional protein FolD (Afipia carboxidovorans (strain ATCC 49405 / DSM 1227 / KCTC 32145 / OM5) (Oligotropha carboxidovorans)).